Reading from the N-terminus, the 654-residue chain is Coiled-coil domain-containing protein 81 (654 aa).

The segment at serine 196–lysine 270 is disordered. Serine 206 carries the phosphoserine modification. 2 stretches are compositionally biased toward basic and acidic residues: residues arginine 212 to threonine 222 and glycine 232 to alanine 251. Serine 273, serine 275, serine 296, and serine 419 each carry phosphoserine. Positions glutamate 293 to arginine 302 are enriched in polar residues. The disordered stretch occupies residues glutamate 293–aspartate 318. Positions serine 431 to arginine 562 form a coiled coil.

The protein localises to the cytoplasm. The protein resides in the cytoskeleton. Its subcellular location is the microtubule organizing center. It localises to the centrosome. This Mus musculus (Mouse) protein is Coiled-coil domain-containing protein 81 (Ccdc81).